The primary structure comprises 245 residues: 14-3-3 protein zeta (245 aa).

This sequence belongs to the 14-3-3 family. Homodimer.

Its subcellular location is the cytoplasm. In terms of biological role, adapter protein implicated in the regulation of a large spectrum of both general and specialized signaling pathways. Binds to a large number of partners, usually by recognition of a phosphoserine or phosphothreonine motif. Binding generally results in the modulation of the activity of the binding partner. The chain is 14-3-3 protein zeta (ywhaz) from Xenopus tropicalis (Western clawed frog).